The following is a 159-amino-acid chain: Phosphopantetheine adenylyltransferase (159 aa).

S9 serves as a coordination point for substrate. Residues 9-10 and H17 contribute to the ATP site; that span reads SF. K41, L73, and K87 together coordinate substrate. ATP-binding positions include 88–90, E98, and 123–129; these read GLR and YGYLSSS.

Belongs to the bacterial CoaD family. Homohexamer. Requires Mg(2+) as cofactor.

It localises to the cytoplasm. The enzyme catalyses (R)-4'-phosphopantetheine + ATP + H(+) = 3'-dephospho-CoA + diphosphate. The protein operates within cofactor biosynthesis; coenzyme A biosynthesis; CoA from (R)-pantothenate: step 4/5. Its function is as follows. Reversibly transfers an adenylyl group from ATP to 4'-phosphopantetheine, yielding dephospho-CoA (dPCoA) and pyrophosphate. This chain is Phosphopantetheine adenylyltransferase, found in Thermoanaerobacter pseudethanolicus (strain ATCC 33223 / 39E) (Clostridium thermohydrosulfuricum).